A 162-amino-acid polypeptide reads, in one-letter code: Protein-export protein SecB (162 aa).

The protein belongs to the SecB family. Homotetramer, a dimer of dimers. One homotetramer interacts with 1 SecA dimer.

The protein localises to the cytoplasm. Its function is as follows. One of the proteins required for the normal export of preproteins out of the cell cytoplasm. It is a molecular chaperone that binds to a subset of precursor proteins, maintaining them in a translocation-competent state. It also specifically binds to its receptor SecA. The protein is Protein-export protein SecB of Pseudoalteromonas translucida (strain TAC 125).